A 199-amino-acid polypeptide reads, in one-letter code: Protein MA_3591 (199 aa).

The 192-residue stretch at Thr5 to Glu196 folds into the AMMECR1 domain.

The chain is Protein MA_3591 from Methanosarcina acetivorans (strain ATCC 35395 / DSM 2834 / JCM 12185 / C2A).